A 160-amino-acid chain; its full sequence is Small ribosomal subunit protein bS6 (160 aa).

The interval 100–160 (PSSVLARKSD…DDARETAGAE (61 aa)) is disordered. Basic and acidic residues-rich tracts occupy residues 106 to 116 (RKSDDRGDRGN) and 136 to 160 (RSSEDREEYRARGEQDDARETAGAE).

It belongs to the bacterial ribosomal protein bS6 family.

Its function is as follows. Binds together with bS18 to 16S ribosomal RNA. This chain is Small ribosomal subunit protein bS6, found in Gluconobacter oxydans (strain 621H) (Gluconobacter suboxydans).